Consider the following 315-residue polypeptide: Glycine--tRNA ligase alpha subunit (315 aa).

This sequence belongs to the class-II aminoacyl-tRNA synthetase family. As to quaternary structure, tetramer of two alpha and two beta subunits.

Its subcellular location is the cytoplasm. The catalysed reaction is tRNA(Gly) + glycine + ATP = glycyl-tRNA(Gly) + AMP + diphosphate. This Pseudomonas entomophila (strain L48) protein is Glycine--tRNA ligase alpha subunit.